We begin with the raw amino-acid sequence, 331 residues long: MAEGGRAEPEEQERGSSRPRPPSARDLQLALAELYEDEMKCKSSKPDRSTPATCRSPRTPPHRLYSGDHKYDGLHIVQPPTGKIVNELFKEAREHGAVPLNEATRSSREDKTKSFTGGGYRLGNSFYKRSEYIYGENQLQDVQVLLKLWRNGFSLDDGELRPYSDPTNAQFLESVKRGETPLELQRLVHGAQVNLDMEDHQDQEYIKPRLRFKAFSGEGQKLGSLTPEIVSTPSSPEEEDKSILNAAVLIDDSMPTTKIQIRLADGSRLVQRFNSTHRILDVRDFIVRSRPEFATTDFILVTSFPSKELTDETVTLQEADILNTVILQQLK.

Basic and acidic residues-rich tracts occupy residues 1–16 (MAEG…ERGS) and 37–48 (DEMKCKSSKPDR). The segment at 1–70 (MAEGGRAEPE…PHRLYSGDHK (70 aa)) is disordered. Alanine 2 is subject to N-acetylalanine. Phosphoserine is present on serine 56. Threonine 59 carries the post-translational modification Phosphothreonine. The residue at position 66 (serine 66) is a Phosphoserine. An SEP domain is found at 141–206 (DVQVLLKLWR…MEDHQDQEYI (66 aa)). Residues serine 231, serine 234, and serine 235 each carry the phosphoserine modification. One can recognise a UBX domain in the interval 252–329 (DSMPTTKIQI…DILNTVILQQ (78 aa)).

Belongs to the NSFL1C family. Interacts with VCP. Does not bind ubiquitin.

It is found in the nucleus. The protein resides in the cytoplasm. Its subcellular location is the cytosol. The protein localises to the endoplasmic reticulum. It localises to the golgi apparatus. It is found in the cytoskeleton. The protein resides in the microtubule organizing center. Its subcellular location is the centrosome. Adapter protein required for Golgi and endoplasmic reticulum biogenesis. Involved in Golgi and endoplasmic reticulum maintenance during interphase and in their reassembly at the end of mitosis. The complex formed with VCP has membrane fusion activity; membrane fusion activity requires USO1-GOLGA2 tethering and BET1L. VCPIP1 is also required, but not its deubiquitinating activity. Together with NSFL1C/p47, regulates the centrosomal levels of kinase AURKA/Aurora A during mitotic progression by promoting AURKA removal from centrosomes in prophase. Also, regulates spindle orientation during mitosis. The sequence is that of UBX domain-containing protein 2B (Ubxn2b) from Mus musculus (Mouse).